The chain runs to 286 residues: 2-hydroxy-6-oxo-6-phenylhexa-2,4-dienoate hydrolase (286 aa).

Residues Gly-42–Gly-43, Asn-51, Lys-111, Ser-180, and Arg-190 contribute to the substrate site. Residues Asn-173–His-271 enclose the AB hydrolase-1 domain. Catalysis depends on His-265, which acts as the Proton acceptor. Residue Trp-266 participates in substrate binding.

This sequence belongs to the AB hydrolase superfamily. BphD family. Homodimer.

The catalysed reaction is 2,6-dioxo-6-phenylhexa-3-enoate + H2O = 2-oxopent-4-enoate + benzoate + H(+). Its pathway is xenobiotic degradation; biphenyl degradation; 2-hydroxy-2,4-pentadienoate and benzoate from biphenyl: step 4/4. Functionally, catalyzes an unusual C-C bond hydrolysis of 2-hydroxy-6-oxo-6-phenylhexa-2,4-dienoic acid (HOPDA) to produce benzoic acid and 2-hydroxy-2,4-pentadienoic acid (HPD). This Delftia acidovorans (Pseudomonas acidovorans) protein is 2-hydroxy-6-oxo-6-phenylhexa-2,4-dienoate hydrolase.